A 334-amino-acid chain; its full sequence is Proline-serine-threonine phosphatase-interacting protein 2 (334 aa).

The 261-residue stretch at 4-264 (SLFKGNFWST…SLETCSIEKD (261 aa)) folds into the F-BAR domain. Positions 66 to 163 (GQSEINTLKR…AEQAVHRSAN (98 aa)) form a coiled coil. Residues 288-322 (YSPQRNAAPPGKTTGPNPARRGPLPVPKRIPDDPD) are disordered. 2 positions are modified to phosphotyrosine: Y323 and Y329.

In terms of processing, phosphorylated on tyrosine. In terms of tissue distribution, expressed in macrophage-containing tissues, including bone marrow, spleen, liver, kidney, intestine and brain.

Its subcellular location is the cytoplasm. It is found in the membrane. Binds to F-actin. May be involved in regulation of the actin cytoskeleton. In Mus musculus (Mouse), this protein is Proline-serine-threonine phosphatase-interacting protein 2 (Pstpip2).